Reading from the N-terminus, the 196-residue chain is FMN-dependent NADH:quinone oxidoreductase (196 aa).

Position 10 (Ser-10) interacts with FMN.

Belongs to the azoreductase type 1 family. In terms of assembly, homodimer. Requires FMN as cofactor.

The enzyme catalyses 2 a quinone + NADH + H(+) = 2 a 1,4-benzosemiquinone + NAD(+). The catalysed reaction is N,N-dimethyl-1,4-phenylenediamine + anthranilate + 2 NAD(+) = 2-(4-dimethylaminophenyl)diazenylbenzoate + 2 NADH + 2 H(+). Quinone reductase that provides resistance to thiol-specific stress caused by electrophilic quinones. Functionally, also exhibits azoreductase activity. Catalyzes the reductive cleavage of the azo bond in aromatic azo compounds to the corresponding amines. The protein is FMN-dependent NADH:quinone oxidoreductase of Cereibacter sphaeroides (strain ATCC 17029 / ATH 2.4.9) (Rhodobacter sphaeroides).